Consider the following 608-residue polypeptide: Nuclear protein localization protein 4 homolog (608 aa).

Alanine 2 carries the N-acetylalanine modification. Lysine 179 bears the N6-acetyllysine mark. Residues 226–363 (IMFENHTVAD…ICRLSPDGHF (138 aa)) enclose the MPN domain. The RanBP2-type zinc finger occupies 580-608 (TSAMWACQHCTFMNQPGTGHCEMCSLPRT).

It belongs to the NPL4 family. Heterodimer with UFD1. The heterodimer binds ubiquitinated proteins. The heterodimer binds to VCP and inhibits Golgi membrane fusion. Interacts with ZFAND2B; probably through VCP.

It localises to the cytoplasm. Its subcellular location is the cytosol. It is found in the endoplasmic reticulum. The protein resides in the nucleus. The protein operates within protein degradation; proteasomal ubiquitin-dependent pathway. The ternary complex containing UFD1, VCP and NPLOC4 binds ubiquitinated proteins and is necessary for the export of misfolded proteins from the ER to the cytoplasm, where they are degraded by the proteasome. The NPLOC4-UFD1-VCP complex regulates spindle disassembly at the end of mitosis and is necessary for the formation of a closed nuclear envelope. Acts as a negative regulator of type I interferon production via the complex formed with VCP and UFD1, which binds to RIGI and recruits RNF125 to promote ubiquitination and degradation of RIGI. This Mus musculus (Mouse) protein is Nuclear protein localization protein 4 homolog (Nploc4).